The primary structure comprises 622 residues: Probable methionine--tRNA ligase, mitochondrial (622 aa).

The short motif at Pro67–His79 is the 'HIGH' region element. A 'KMSKS' region motif is present at residues Lys366–Ser370. Lys369 is an ATP binding site. Residues Leu592–Ala622 form a disordered region. The span at Gly610–Ala622 shows a compositional bias: low complexity.

The protein belongs to the class-I aminoacyl-tRNA synthetase family.

The protein localises to the mitochondrion matrix. It carries out the reaction tRNA(Met) + L-methionine + ATP = L-methionyl-tRNA(Met) + AMP + diphosphate. This is Probable methionine--tRNA ligase, mitochondrial from Neurospora crassa (strain ATCC 24698 / 74-OR23-1A / CBS 708.71 / DSM 1257 / FGSC 987).